Reading from the N-terminus, the 195-residue chain is Thioredoxin reductase-like selenoprotein T (195 aa).

An N-terminal signal peptide occupies residues 1–19 (MRLLLLLLVAASAVVRSEA). The segment at residues 46-49 (CVSU) is a cross-link (cysteinyl-selenocysteine (Cys-Sec)). Position 49 (selenocysteine 49) is a non-standard amino acid, selenocysteine. The helical transmembrane segment at 85 to 103 (IASFLSVFKLVLIGLIIVG) threads the bilayer.

The protein belongs to the SelWTH family. Selenoprotein T subfamily. May contain a selenide-sulfide bond between Cys-46 and Sec-49. This bond is speculated to serve as redox-active pair. Ubiquitous. Highly expressed in the endocrine pancreas. Expressed at low levels in the adult brain.

The protein resides in the endoplasmic reticulum membrane. It carries out the reaction [thioredoxin]-dithiol + NADP(+) = [thioredoxin]-disulfide + NADPH + H(+). In terms of biological role, selenoprotein with thioredoxin reductase-like oxidoreductase activity. Protects dopaminergic neurons against oxidative stress and cell death. Involved in ADCYAP1/PACAP-induced calcium mobilization and neuroendocrine secretion. Plays a role in fibroblast anchorage and redox regulation. In gastric smooth muscle, modulates the contraction processes through the regulation of calcium release and MYLK activation. In pancreatic islets, involved in the control of glucose homeostasis, contributes to prolonged ADCYAP1/PACAP-induced insulin secretion. This chain is Thioredoxin reductase-like selenoprotein T, found in Mus musculus (Mouse).